We begin with the raw amino-acid sequence, 166 residues long: Putative pre-16S rRNA nuclease (166 aa).

The protein belongs to the YqgF nuclease family.

It localises to the cytoplasm. Could be a nuclease involved in processing of the 5'-end of pre-16S rRNA. In Mesorhizobium japonicum (strain LMG 29417 / CECT 9101 / MAFF 303099) (Mesorhizobium loti (strain MAFF 303099)), this protein is Putative pre-16S rRNA nuclease.